Reading from the N-terminus, the 590-residue chain is Acyl-CoA ligase sidI (590 aa).

The short motif at 6 to 14 is the PTS2-type peroxisomal targeting signal element; that stretch reads RLQQTLSHL. Residues 220–228, 359–364, aspartate 449, and arginine 464 contribute to the ATP site; these read TSGSTGNPK and SSYGLT. Substrate is bound at residue threonine 364. Residues 472–474 and 543–545 contribute to the CoA site; these read GGE and YFF. Lysine 563 contributes to the ATP binding site.

It belongs to the ATP-dependent AMP-binding enzyme family.

The protein resides in the peroxisome. Its pathway is siderophore biosynthesis. Functionally, acyl-CoA ligase; part of the siderophore biosynthetic pathway. Aspergillus fumigatus produces 4 types of siderophores, low-molecular-mass iron chelators, including excreted fusarinine C (FsC) and triacetylfusarinine C (TAFC) for iron uptake and intacellular ferricrocin (FC) for hyphal and hydroxyferricrocin (HFC) for conidial iron distribution and storage. TAFC consists of 3 N(2)-acetyl-N(5)-anhydromevalonyl-N(5)-hydroxyornithine residues cyclically linked by ester bonds; FC is a cyclic hexapeptide with the structure Gly-Ser-Gly-(N(5)-acetyl-N(5)-hydroxyornithine)x3. The biosynthesis of all four siderophores depends on the hydroxylation of ornithine, catalyzed by the monooxygenase sidA. Subsequently, the pathways for biosynthesis of extra- and intracellular siderophores split. For biosynthesis of extracellular siderophores, the transacylase sidF transfers anhydromevalonyl to N(5)-hydroxyornithine. The required anhydromevalonyl-CoA moiety is derived from mevalonate by CoA ligation and dehydration catalyzed by sidI and sidH respectively. The acetylation of N(5)-hydroxyornithine for FC biosynthesis involves the constitutively expressed sidL. FC is hydroxylated to HFC by an as yet uncharacterized enzyme during conidiation. Assembly of fusarinine C (FsC) and FC is catalyzed by two different nonribosomal peptide synthetases (NRPS), sidD and sidC respectively. Subsequently, sidG catalyzes N2-acetylation of FsC for forming TAFC. Both extra- and intracellular siderophores are crucial for growth during iron limitation and virulence. In Aspergillus fumigatus (strain ATCC MYA-4609 / CBS 101355 / FGSC A1100 / Af293) (Neosartorya fumigata), this protein is Acyl-CoA ligase sidI.